The chain runs to 194 residues: Thymidylate kinase (194 aa).

Residue 7-14 (GIDTAGKS) coordinates ATP.

Belongs to the thymidylate kinase family.

The enzyme catalyses dTMP + ATP = dTDP + ADP. Its function is as follows. Phosphorylation of dTMP to form dTDP in both de novo and salvage pathways of dTTP synthesis. This Nautilia profundicola (strain ATCC BAA-1463 / DSM 18972 / AmH) protein is Thymidylate kinase.